We begin with the raw amino-acid sequence, 320 residues long: Ribose-phosphate pyrophosphokinase (320 aa).

Residues 43–45 (DGE) and 102–103 (RQ) each bind ATP. The Mg(2+) site is built by H136 and D178. Residue K201 is part of the active site. D-ribose 5-phosphate-binding positions include R203, D227, and 231-235 (DTAGT).

Belongs to the ribose-phosphate pyrophosphokinase family. Class I subfamily. Homohexamer. The cofactor is Mg(2+).

It localises to the cytoplasm. The enzyme catalyses D-ribose 5-phosphate + ATP = 5-phospho-alpha-D-ribose 1-diphosphate + AMP + H(+). It functions in the pathway metabolic intermediate biosynthesis; 5-phospho-alpha-D-ribose 1-diphosphate biosynthesis; 5-phospho-alpha-D-ribose 1-diphosphate from D-ribose 5-phosphate (route I): step 1/1. Involved in the biosynthesis of the central metabolite phospho-alpha-D-ribosyl-1-pyrophosphate (PRPP) via the transfer of pyrophosphoryl group from ATP to 1-hydroxyl of ribose-5-phosphate (Rib-5-P). The sequence is that of Ribose-phosphate pyrophosphokinase from Clostridium tetani (strain Massachusetts / E88).